The chain runs to 338 residues: Ketol-acid reductoisomerase (NADP(+)) (338 aa).

The region spanning 1–181 is the KARI N-terminal Rossmann domain; the sequence is MTVYYDKDCN…GGGRTAIIET (181 aa). Residues 24 to 27, Arg47, Ser52, and 82 to 85 each bind NADP(+); these read FGSQ and DENQ. Residue His107 is part of the active site. Gly133 contributes to the NADP(+) binding site. A KARI C-terminal knotted domain is found at 182-327; that stretch reads TFKDETETDL…VKLRTMMPWI (146 aa). Mg(2+) contacts are provided by Asp190, Glu194, Glu226, and Glu230. Ser251 contributes to the substrate binding site.

It belongs to the ketol-acid reductoisomerase family. Mg(2+) is required as a cofactor.

It catalyses the reaction (2R)-2,3-dihydroxy-3-methylbutanoate + NADP(+) = (2S)-2-acetolactate + NADPH + H(+). The enzyme catalyses (2R,3R)-2,3-dihydroxy-3-methylpentanoate + NADP(+) = (S)-2-ethyl-2-hydroxy-3-oxobutanoate + NADPH + H(+). The protein operates within amino-acid biosynthesis; L-isoleucine biosynthesis; L-isoleucine from 2-oxobutanoate: step 2/4. Its pathway is amino-acid biosynthesis; L-valine biosynthesis; L-valine from pyruvate: step 2/4. Involved in the biosynthesis of branched-chain amino acids (BCAA). Catalyzes an alkyl-migration followed by a ketol-acid reduction of (S)-2-acetolactate (S2AL) to yield (R)-2,3-dihydroxy-isovalerate. In the isomerase reaction, S2AL is rearranged via a Mg-dependent methyl migration to produce 3-hydroxy-3-methyl-2-ketobutyrate (HMKB). In the reductase reaction, this 2-ketoacid undergoes a metal-dependent reduction by NADPH to yield (R)-2,3-dihydroxy-isovalerate. This Sulfurimonas denitrificans (strain ATCC 33889 / DSM 1251) (Thiomicrospira denitrificans (strain ATCC 33889 / DSM 1251)) protein is Ketol-acid reductoisomerase (NADP(+)).